Consider the following 408-residue polypeptide: Dicamba O-demethylase 1, ferredoxin reductase component (408 aa).

Residues G14, K49, V82, R130, D279, and V298 each coordinate FAD.

It belongs to the FAD-dependent oxidoreductase family. In terms of assembly, monomer. The dicamba O-demethylase multicomponent enzyme system is composed of an oxygenase component (DdmC) and an electron transfer component formed by a ferredoxin reductase (DdmA1) and a ferredoxin (DdmB). In vitro, dicamba O-demethylase assays in which DdmA2 is substituted for DdmA1 demonstrate that the two enzymes possess nearly identical activities. The cofactor is FAD.

It carries out the reaction 2 reduced [2Fe-2S]-[ferredoxin] + NAD(+) + H(+) = 2 oxidized [2Fe-2S]-[ferredoxin] + NADH. Functionally, component of the dicamba O-demethylase multicomponent enzyme system involved in the degradation of the herbicide dicamba. In vitro, catalyzes the transfers of electrons from ferredoxin (DdmB) to NADH. Both NADH and NADPH support enzyme activity, with NADH being markedly more effective than NADPH. The protein is Dicamba O-demethylase 1, ferredoxin reductase component of Stenotrophomonas maltophilia (Pseudomonas maltophilia).